A 681-amino-acid chain; its full sequence is DNA ligase (681 aa).

NAD(+) contacts are provided by residues 45–49 (DFDFD), 94–95 (SL), and glutamate 120. Catalysis depends on lysine 122, which acts as the N6-AMP-lysine intermediate. NAD(+) contacts are provided by arginine 143, glutamate 177, lysine 289, and lysine 313. Cysteine 403, cysteine 406, cysteine 421, and cysteine 426 together coordinate Zn(2+). Residues 593–681 (ADQQPFAGQS…SLKIDFKNLI (89 aa)) enclose the BRCT domain.

This sequence belongs to the NAD-dependent DNA ligase family. LigA subfamily. Mg(2+) serves as cofactor. The cofactor is Mn(2+).

The catalysed reaction is NAD(+) + (deoxyribonucleotide)n-3'-hydroxyl + 5'-phospho-(deoxyribonucleotide)m = (deoxyribonucleotide)n+m + AMP + beta-nicotinamide D-nucleotide.. In terms of biological role, DNA ligase that catalyzes the formation of phosphodiester linkages between 5'-phosphoryl and 3'-hydroxyl groups in double-stranded DNA using NAD as a coenzyme and as the energy source for the reaction. It is essential for DNA replication and repair of damaged DNA. This Leptospira interrogans serogroup Icterohaemorrhagiae serovar copenhageni (strain Fiocruz L1-130) protein is DNA ligase.